The following is a 607-amino-acid chain: Actin-related protein 5 (607 aa).

Residue lysine 283 forms a Glycyl lysine isopeptide (Lys-Gly) (interchain with G-Cter in SUMO2) linkage. Coiled coils occupy residues threonine 288–leucine 327 and glutamate 355–valine 384. Over residues serine 584–serine 596 the composition is skewed to low complexity. The segment at serine 584 to alanine 607 is disordered. Residues alanine 597–alanine 607 show a composition bias toward gly residues.

This sequence belongs to the actin family. ARP5 subfamily. In terms of assembly, component of the chromatin remodeling INO80 complex; specifically part of a complex module associated with the helicase ATP-binding and the helicase C-terminal domain of INO80. Interacts with DDB1. Interacts with ACTR8; the interaction is observed in asynchronous (interphase) cells but not in metaphase-arrested cells indicative for a possible dissociation of the INO80 complex in mitotic cells.

The protein resides in the nucleus. Its subcellular location is the cytoplasm. Its function is as follows. Proposed core component of the chromatin remodeling INO80 complex which is involved in transcriptional regulation, DNA replication and probably DNA repair. Involved in DNA double-strand break repair and UV-damage excision repair. The chain is Actin-related protein 5 (ACTR5) from Homo sapiens (Human).